A 549-amino-acid chain; its full sequence is Glucose-6-phosphate isomerase (549 aa).

Glu-355 serves as the catalytic Proton donor. Catalysis depends on residues His-387 and Lys-515.

This sequence belongs to the GPI family.

Its subcellular location is the cytoplasm. It carries out the reaction alpha-D-glucose 6-phosphate = beta-D-fructose 6-phosphate. Its pathway is carbohydrate biosynthesis; gluconeogenesis. It functions in the pathway carbohydrate degradation; glycolysis; D-glyceraldehyde 3-phosphate and glycerone phosphate from D-glucose: step 2/4. In terms of biological role, catalyzes the reversible isomerization of glucose-6-phosphate to fructose-6-phosphate. This Haemophilus influenzae (strain 86-028NP) protein is Glucose-6-phosphate isomerase.